Reading from the N-terminus, the 282-residue chain is Homeobox-leucine zipper protein HAT1 (282 aa).

Positions 71 to 134 are disordered; that stretch reads LEEETGVSSP…EEDYGGETCR (64 aa). A compositionally biased stretch (low complexity) spans 76–89; the sequence is GVSSPNSTISSTVS. Positions 132–191 form a DNA-binding region, homeobox; the sequence is TCRKKLRLSKDQSAVLEDTFKEHNTLNPKQKLALAKKLGLTARQVEVWFQNRRARTKLKQ. Residues 199 to 220 form a leucine-zipper region; the sequence is LKRCVEKLTEENRRLEKEAAEL.

The protein belongs to the HD-ZIP homeobox family. Class II subfamily. In terms of assembly, interacts with BZIP30.

The protein localises to the nucleus. Probable transcription factor. This is Homeobox-leucine zipper protein HAT1 (HAT1) from Arabidopsis thaliana (Mouse-ear cress).